A 236-amino-acid polypeptide reads, in one-letter code: (5-formylfuran-3-yl)methyl phosphate synthase (236 aa).

The Schiff-base intermediate with substrate role is filled by Lys27. Lys85 (proton acceptor) is an active-site residue.

The protein belongs to the MfnB family.

It carries out the reaction 2 D-glyceraldehyde 3-phosphate = 4-(hydroxymethyl)-2-furancarboxaldehyde phosphate + phosphate + 2 H2O. Its pathway is cofactor biosynthesis; methanofuran biosynthesis. In terms of biological role, catalyzes the formation of 4-(hydroxymethyl)-2-furancarboxaldehyde phosphate (4-HFC-P) from two molecules of glyceraldehyde-3-P (GA-3-P). The chain is (5-formylfuran-3-yl)methyl phosphate synthase from Methanococcus maripaludis (strain DSM 14266 / JCM 13030 / NBRC 101832 / S2 / LL).